Reading from the N-terminus, the 483-residue chain is Myosin-binding protein H (483 aa).

A compositionally biased stretch (polar residues) spans 1 to 15 (MTGKATSEASVSTPE). A disordered region spans residues 1 to 78 (MTGKATSEAS…PEPPSEDVPS (78 aa)). 3 positions are modified to phosphothreonine: threonine 2, threonine 6, and threonine 26. The segment covering 41 to 66 (QEQAPEPQKPQAQDPAAPAASAMPAA) has biased composition (low complexity). The Fibronectin type-III 1 domain occupies 79 to 174 (APLRLTLEDV…LDQPVHIQEI (96 aa)). The Ig-like C2-type 1 domain maps to 178 to 266 (PKIRVPRHLR…EGLEAKASID (89 aa)). The region spanning 275–370 (PPSSIKLLDV…TKELAHIHKA (96 aa)) is the Fibronectin type-III 2 domain. An Ig-like C2-type 2 domain is found at 388 to 472 (PSFTQPLADH…INVLGEASVD (85 aa)).

This sequence belongs to the immunoglobulin superfamily. MyBP family. In terms of tissue distribution, skeletal muscle. Expressed at low levels in heart ventricles.

Functionally, binds to myosin; probably involved in interaction with thick myofilaments in the A-band. The protein is Myosin-binding protein H (Mybph) of Mus musculus (Mouse).